Here is a 255-residue protein sequence, read N- to C-terminus: Type III pantothenate kinase (255 aa).

6 to 13 (DVGNTNIV) contributes to the ATP binding site. Substrate-binding positions include Tyr100 and 107–110 (GADR). The active-site Proton acceptor is the Asp109. K(+) is bound at residue Asp129. Residue Thr132 coordinates ATP. Thr184 serves as a coordination point for substrate.

It belongs to the type III pantothenate kinase family. Homodimer. It depends on NH4(+) as a cofactor. The cofactor is K(+).

The protein localises to the cytoplasm. It catalyses the reaction (R)-pantothenate + ATP = (R)-4'-phosphopantothenate + ADP + H(+). It participates in cofactor biosynthesis; coenzyme A biosynthesis; CoA from (R)-pantothenate: step 1/5. Catalyzes the phosphorylation of pantothenate (Pan), the first step in CoA biosynthesis. The sequence is that of Type III pantothenate kinase from Geobacter sulfurreducens (strain ATCC 51573 / DSM 12127 / PCA).